The following is a 245-amino-acid chain: MSRVATSDPSVTARTVAVHAPNGGEGGSVELPGGVFDVPLNIPLIHQVVVAQLAAARQGTHDTKTRGEVRGGGRKPYRQKGTGRARQGSLRAPQFTGGGTVHGPTPRRYDQRTPKKMKAAALRGALSDRARNNRVHVVSSLVSGETPSTKSAVTALRTIADTRRVLVVASRSDELTWKSLRNVAAVHLLDPGQLNTYDVLVSDDVVFIEDALAAFLARDTRPATSTAGTEAAAGTEGVAGAEENK.

The segment covering 1 to 13 (MSRVATSDPSVTA) has biased composition (polar residues). Disordered stretches follow at residues 1–28 (MSRV…EGGS), 56–114 (ARQG…QRTP), and 224–245 (TSTA…EENK). Positions 59–71 (GTHDTKTRGEVRG) are enriched in basic and acidic residues. Positions 72 to 83 (GGRKPYRQKGTG) are enriched in basic residues.

The protein belongs to the universal ribosomal protein uL4 family. In terms of assembly, part of the 50S ribosomal subunit.

In terms of biological role, one of the primary rRNA binding proteins, this protein initially binds near the 5'-end of the 23S rRNA. It is important during the early stages of 50S assembly. It makes multiple contacts with different domains of the 23S rRNA in the assembled 50S subunit and ribosome. Forms part of the polypeptide exit tunnel. In Frankia casuarinae (strain DSM 45818 / CECT 9043 / HFP020203 / CcI3), this protein is Large ribosomal subunit protein uL4.